We begin with the raw amino-acid sequence, 426 residues long: Glutamate-1-semialdehyde 2,1-aminomutase (426 aa).

The residue at position 265 (Lys265) is an N6-(pyridoxal phosphate)lysine.

The protein belongs to the class-III pyridoxal-phosphate-dependent aminotransferase family. HemL subfamily. In terms of assembly, homodimer. It depends on pyridoxal 5'-phosphate as a cofactor.

It localises to the cytoplasm. The enzyme catalyses (S)-4-amino-5-oxopentanoate = 5-aminolevulinate. The protein operates within porphyrin-containing compound metabolism; protoporphyrin-IX biosynthesis; 5-aminolevulinate from L-glutamyl-tRNA(Glu): step 2/2. The protein is Glutamate-1-semialdehyde 2,1-aminomutase of Neisseria gonorrhoeae (strain ATCC 700825 / FA 1090).